A 194-amino-acid polypeptide reads, in one-letter code: MASWWRAFPQAARRYPWPTNVLLYAGLFSAGDALQQRLRGGPADWRQTRRVATLAVTFHGNFNYVWLRLLERALPGRAPRTVLAKVLCDQTVGGPIALSAFYVGMSVLQGKDDIFLDLKQKFWNTYKSGLMYWPFVQLTNFSLVPVHWRTAYTGLCAFLWATFLCFSQQSGDGTLQSIFIFLRRKEASDKSPEK.

Residues 1-14 (MASWWRAFPQAARR) lie on the Cytoplasmic side of the membrane. The helical transmembrane segment at 15–34 (YPWPTNVLLYAGLFSAGDAL) threads the bilayer. The targeting to peroxisomes stretch occupies residues 16 to 55 (PWPTNVLLYAGLFSAGDALQQRLRGGPADWRQTRRVATLA). Over 35 to 50 (QQRLRGGPADWRQTRR) the chain is Lumenal. Residues 51-67 (VATLAVTFHGNFNYVWL) traverse the membrane as a helical segment. The Cytoplasmic portion of the chain corresponds to 68–91 (RLLERALPGRAPRTVLAKVLCDQT). The chain crosses the membrane as a helical span at residues 92 to 110 (VGGPIALSAFYVGMSVLQG). Residues 111 to 150 (KDDIFLDLKQKFWNTYKSGLMYWPFVQLTNFSLVPVHWRT) lie on the Lumenal side of the membrane. A helical membrane pass occupies residues 151–168 (AYTGLCAFLWATFLCFSQ). Topologically, residues 169–194 (QSGDGTLQSIFIFLRRKEASDKSPEK) are cytoplasmic.

This sequence belongs to the peroxisomal membrane protein PXMP2/4 family. In terms of tissue distribution, isoform 1 and isoform 3 are expressed in the kidney (at protein level). Isoform 1 is expressed in the kidney, spleen, heart, brain, lung and liver. Isoform 3 is expressed in the kidney. Isoform 1 and isoform 3 expression increase during development, reache their highest level in adulthood and decrease with aging.

It is found in the peroxisome membrane. The protein resides in the cytoplasm. Functionally, participates in reactive oxygen species metabolism by up- or down-regulation of the genes of antioxidant enzymes. Protective against the mitochondrial apoptotic cascade. Its function is as follows. Participates in reactive oxygen species metabolism by up- or down-regulation of the genes of antioxidant enzymes. The chain is Mpv17-like protein (Mpv17l) from Mus musculus (Mouse).